A 71-amino-acid chain; its full sequence is UPF0346 protein SZO_05010 (71 aa).

Belongs to the UPF0346 family.

This is UPF0346 protein SZO_05010 from Streptococcus equi subsp. zooepidemicus (strain H70).